The chain runs to 307 residues: tRNA pseudouridine synthase B (307 aa).

D38 serves as the catalytic Nucleophile.

Belongs to the pseudouridine synthase TruB family. Type 1 subfamily.

It carries out the reaction uridine(55) in tRNA = pseudouridine(55) in tRNA. Functionally, responsible for synthesis of pseudouridine from uracil-55 in the psi GC loop of transfer RNAs. In Bacillus cereus (strain ZK / E33L), this protein is tRNA pseudouridine synthase B.